A 189-amino-acid chain; its full sequence is Elongation factor P (189 aa).

This sequence belongs to the elongation factor P family.

The protein resides in the cytoplasm. The protein operates within protein biosynthesis; polypeptide chain elongation. Its function is as follows. Involved in peptide bond synthesis. Stimulates efficient translation and peptide-bond synthesis on native or reconstituted 70S ribosomes in vitro. Probably functions indirectly by altering the affinity of the ribosome for aminoacyl-tRNA, thus increasing their reactivity as acceptors for peptidyl transferase. The chain is Elongation factor P from Rhizobium meliloti (strain 1021) (Ensifer meliloti).